A 443-amino-acid polypeptide reads, in one-letter code: Glutamate--tRNA ligase 1 (443 aa).

A 'HIGH' region motif is present at residues 7–17 (PSPTGYLHVGN). A 'KMSKS' region motif is present at residues 236–240 (KISKR). Lys-239 serves as a coordination point for ATP.

This sequence belongs to the class-I aminoacyl-tRNA synthetase family. Glutamate--tRNA ligase type 1 subfamily. Monomer.

It localises to the cytoplasm. The catalysed reaction is tRNA(Glu) + L-glutamate + ATP = L-glutamyl-tRNA(Glu) + AMP + diphosphate. In terms of biological role, catalyzes the attachment of glutamate to tRNA(Glu) in a two-step reaction: glutamate is first activated by ATP to form Glu-AMP and then transferred to the acceptor end of tRNA(Glu). This chain is Glutamate--tRNA ligase 1, found in Ehrlichia chaffeensis (strain ATCC CRL-10679 / Arkansas).